The sequence spans 577 residues: MNIQALLSEKVSQALIAAGAPADCEPQVRQSAKVQFGDYQANGVMAVAKKLGMAPRQLAEQVLSHLDLNGIANKVEIAGPGFINIFLDPAFLADNVNRALQSERLGVTKPQAQTIVVDYSAPNVAKEMHVGHLRSTIIGDASVRTLEFLGHKVIRANHVGDWGTQFGMLIAYLEKQQQENAGEMALADLEGFYREAKKHYDEDEAFAERARSYVVKLQGGDQYFLQMWRKLVDITMSQNQITYDRLNVTLTRDDVMGESLYNPMLPGIVADLKAKGLAVESEGATVVFLDEYKNKEGEPMGVIIQKKDGGYLYTTTDIACAKYRYETLHADRVLYYIDSRQHQHLMQAWTIVRKAGYVPDSVPLEHHMFGMMLGKDGKPFKTRAGGTVKLADLLDEALERARRLVAEKNPDMSADELENLAKVVGIGAVKYADLSKNRTTDYVFDWDNMLAFEGNTAPYMQYAYTRVLSVFRKAGIDENAMNDAPVVIAEDREAQLAARLLQFEETLSVVAREGTPHVMCAYLYDLAGLFSGFYEHCPILSAESEETRNSRLKLALLTAKTLKLGLDTLGIETVERM.

Residues Pro-122 to His-132 carry the 'HIGH' region motif.

Belongs to the class-I aminoacyl-tRNA synthetase family. Monomer.

It localises to the cytoplasm. The catalysed reaction is tRNA(Arg) + L-arginine + ATP = L-arginyl-tRNA(Arg) + AMP + diphosphate. The chain is Arginine--tRNA ligase from Klebsiella pneumoniae (strain 342).